A 550-amino-acid polypeptide reads, in one-letter code: Glucose-6-phosphate isomerase (550 aa).

Glu357 functions as the Proton donor in the catalytic mechanism. Catalysis depends on residues His389 and Lys509.

It belongs to the GPI family.

The protein localises to the cytoplasm. It carries out the reaction alpha-D-glucose 6-phosphate = beta-D-fructose 6-phosphate. Its pathway is carbohydrate biosynthesis; gluconeogenesis. The protein operates within carbohydrate degradation; glycolysis; D-glyceraldehyde 3-phosphate and glycerone phosphate from D-glucose: step 2/4. Functionally, catalyzes the reversible isomerization of glucose-6-phosphate to fructose-6-phosphate. This is Glucose-6-phosphate isomerase from Anaeromyxobacter dehalogenans (strain 2CP-C).